A 389-amino-acid polypeptide reads, in one-letter code: Succinate--CoA ligase [ADP-forming] subunit beta (389 aa).

ATP contacts are provided by residues Lys-46, 53 to 55, Glu-99, Cys-102, and Glu-107; that span reads GRG. Asn-199 and Asp-213 together coordinate Mg(2+). Substrate is bound by residues Asn-264 and 321-323; that span reads GIV.

The protein belongs to the succinate/malate CoA ligase beta subunit family. As to quaternary structure, heterotetramer of two alpha and two beta subunits. Mg(2+) serves as cofactor.

The enzyme catalyses succinate + ATP + CoA = succinyl-CoA + ADP + phosphate. It carries out the reaction GTP + succinate + CoA = succinyl-CoA + GDP + phosphate. The protein operates within carbohydrate metabolism; tricarboxylic acid cycle; succinate from succinyl-CoA (ligase route): step 1/1. Functionally, succinyl-CoA synthetase functions in the citric acid cycle (TCA), coupling the hydrolysis of succinyl-CoA to the synthesis of either ATP or GTP and thus represents the only step of substrate-level phosphorylation in the TCA. The beta subunit provides nucleotide specificity of the enzyme and binds the substrate succinate, while the binding sites for coenzyme A and phosphate are found in the alpha subunit. This chain is Succinate--CoA ligase [ADP-forming] subunit beta, found in Haemophilus influenzae (strain 86-028NP).